Consider the following 94-residue polypeptide: Co-chaperonin GroES (94 aa).

The protein belongs to the GroES chaperonin family. In terms of assembly, heptamer of 7 subunits arranged in a ring. Interacts with the chaperonin GroEL.

It is found in the cytoplasm. In terms of biological role, together with the chaperonin GroEL, plays an essential role in assisting protein folding. The GroEL-GroES system forms a nano-cage that allows encapsulation of the non-native substrate proteins and provides a physical environment optimized to promote and accelerate protein folding. GroES binds to the apical surface of the GroEL ring, thereby capping the opening of the GroEL channel. The protein is Co-chaperonin GroES of Finegoldia magna (strain ATCC 29328 / DSM 20472 / WAL 2508) (Peptostreptococcus magnus).